The sequence spans 451 residues: Heat shock factor protein (451 aa).

The DNA-binding element occupies 12–117 (VPAFLAKLWT…LLENIKRKVN (106 aa)). 2 disordered regions span residues 210 to 273 (LNDS…LEAS) and 285 to 307 (LTPSQSPEQSPAPPKLDDTPISP). The segment covering 232–246 (PSSTSYPVSGFTDSS) has biased composition (polar residues).

It belongs to the HSF family. In terms of assembly, homotrimer. Exhibits temperature-dependent phosphorylation.

The protein localises to the nucleus. Functionally, DNA-binding protein that specifically binds heat shock promoter elements (HSE) and activates transcription. The chain is Heat shock factor protein (hsf1) from Xenopus laevis (African clawed frog).